The chain runs to 160 residues: SsrA-binding protein (160 aa).

The tract at residues 132-160 (KEFDKRDTVRERDSNRELQRTMRNKGKEE) is disordered.

The protein belongs to the SmpB family.

It localises to the cytoplasm. Required for rescue of stalled ribosomes mediated by trans-translation. Binds to transfer-messenger RNA (tmRNA), required for stable association of tmRNA with ribosomes. tmRNA and SmpB together mimic tRNA shape, replacing the anticodon stem-loop with SmpB. tmRNA is encoded by the ssrA gene; the 2 termini fold to resemble tRNA(Ala) and it encodes a 'tag peptide', a short internal open reading frame. During trans-translation Ala-aminoacylated tmRNA acts like a tRNA, entering the A-site of stalled ribosomes, displacing the stalled mRNA. The ribosome then switches to translate the ORF on the tmRNA; the nascent peptide is terminated with the 'tag peptide' encoded by the tmRNA and targeted for degradation. The ribosome is freed to recommence translation, which seems to be the essential function of trans-translation. The sequence is that of SsrA-binding protein from Pseudomonas entomophila (strain L48).